A 387-amino-acid polypeptide reads, in one-letter code: Protein PHYTOCHROME KINASE SUBSTRATE 3 (387 aa).

3 disordered regions span residues 1–21 (MDAEKKSAHFRQISSYKPQLL), 74–128 (HEKE…CNSQ), and 242–271 (LSTKNNNHNNNGNNSSMSSNTQEEETASVA). Residues 12–21 (QISSYKPQLL) are compositionally biased toward polar residues. Positions 74 to 83 (HEKENTHDHP) are enriched in basic and acidic residues. The segment covering 114-128 (HGTPSVRSESSCNSQ) has biased composition (polar residues). Over residues 242–261 (LSTKNNNHNNNGNNSSMSSN) the composition is skewed to low complexity.

It belongs to the PKS family.

Its function is as follows. Probably involved in the phytochrome signaling pathway. The protein is Protein PHYTOCHROME KINASE SUBSTRATE 3 (PKS3) of Arabidopsis thaliana (Mouse-ear cress).